A 230-amino-acid chain; its full sequence is Lipoprotein-releasing system ATP-binding protein LolD (230 aa).

An ABC transporter domain is found at 6 to 230 (LQVQAVSKSY…GYLQVPESAQ (225 aa)). ATP is bound at residue 42–49 (GTSGSGKS).

This sequence belongs to the ABC transporter superfamily. Lipoprotein translocase (TC 3.A.1.125) family. As to quaternary structure, the complex is composed of two ATP-binding proteins (LolD) and two transmembrane proteins (LolC and LolE).

It is found in the cell inner membrane. Part of the ABC transporter complex LolCDE involved in the translocation of mature outer membrane-directed lipoproteins, from the inner membrane to the periplasmic chaperone, LolA. Responsible for the formation of the LolA-lipoprotein complex in an ATP-dependent manner. The polypeptide is Lipoprotein-releasing system ATP-binding protein LolD (Shewanella oneidensis (strain ATCC 700550 / JCM 31522 / CIP 106686 / LMG 19005 / NCIMB 14063 / MR-1)).